We begin with the raw amino-acid sequence, 1165 residues long: Error-prone DNA polymerase (1165 aa).

A disordered region spans residues 1111–1165; that stretch reads SEGLARPPLPTGADLYEPLTYEPLNGDRRDNPDAPAQRLRHPRDVRILPPSRDFH. Residues 1152–1165 show a composition bias toward basic and acidic residues; sequence PRDVRILPPSRDFH.

This sequence belongs to the DNA polymerase type-C family. DnaE2 subfamily.

The protein localises to the cytoplasm. It carries out the reaction DNA(n) + a 2'-deoxyribonucleoside 5'-triphosphate = DNA(n+1) + diphosphate. In terms of biological role, DNA polymerase involved in damage-induced mutagenesis and translesion synthesis (TLS). It is not the major replicative DNA polymerase. The chain is Error-prone DNA polymerase from Rhodopseudomonas palustris (strain HaA2).